A 345-amino-acid chain; its full sequence is MKKGCKYGTHRVIEPAGVLPQPAKKISNDMEIFSNEILIDVIALNIDSASFTQIEEEAGHDVEKVKAKIKEIVAERGKMQNPVTGSGGMLIGTVEKIGDDLVGKTDLKVGDKIATLVSLSLTPLRIDEIINIKPEIDRVEIKGKAILFESGIYAVLPKDMPENLALAALDVAGAPAQVAKLVKPCQSVAILGSAGKSGMLCAYEAVKRVGPTGKVIGVVRNDKEKALLQRVSDKVKIVIADATKPMDVLHAVLEANDAKEVDVAINCVNVPNTEMSTILPVKEFGIAYFFSMATGFSKAALGAEGVGKDITMIVGNGYTVDHAAITLEELRESAVLREIFNEIYL.

It belongs to the KDD family. In terms of assembly, homodimer.

The catalysed reaction is (3S,5S)-3,5-diaminohexanoate + NAD(+) + H2O = (5S)-5-amino-3-oxohexanoate + NH4(+) + NADH + H(+). The protein operates within amino-acid degradation; L-lysine degradation via acetate pathway. Involved in the anaerobic fermentation of lysine. Catalyzes the oxidative deamination of L-erythro-3,5-diaminohexanoate (3,5-DAH) to 3-keto-5-aminohexanoate (KAH). It can use NAD or NADP. This is L-erythro-3,5-diaminohexanoate dehydrogenase from Fusobacterium nucleatum subsp. nucleatum (strain ATCC 25586 / DSM 15643 / BCRC 10681 / CIP 101130 / JCM 8532 / KCTC 2640 / LMG 13131 / VPI 4355).